Reading from the N-terminus, the 125-residue chain is Holo-[acyl-carrier-protein] synthase (125 aa).

Asp-8 and Glu-57 together coordinate Mg(2+).

It belongs to the P-Pant transferase superfamily. AcpS family. Requires Mg(2+) as cofactor.

Its subcellular location is the cytoplasm. It carries out the reaction apo-[ACP] + CoA = holo-[ACP] + adenosine 3',5'-bisphosphate + H(+). Its function is as follows. Transfers the 4'-phosphopantetheine moiety from coenzyme A to a Ser of acyl-carrier-protein. In Neisseria meningitidis serogroup C (strain 053442), this protein is Holo-[acyl-carrier-protein] synthase.